We begin with the raw amino-acid sequence, 105 residues long: Pyrimidine/purine nucleoside phosphorylase (105 aa).

It belongs to the nucleoside phosphorylase PpnP family.

The enzyme catalyses a purine D-ribonucleoside + phosphate = a purine nucleobase + alpha-D-ribose 1-phosphate. It carries out the reaction adenosine + phosphate = alpha-D-ribose 1-phosphate + adenine. The catalysed reaction is cytidine + phosphate = cytosine + alpha-D-ribose 1-phosphate. It catalyses the reaction guanosine + phosphate = alpha-D-ribose 1-phosphate + guanine. The enzyme catalyses inosine + phosphate = alpha-D-ribose 1-phosphate + hypoxanthine. It carries out the reaction thymidine + phosphate = 2-deoxy-alpha-D-ribose 1-phosphate + thymine. The catalysed reaction is uridine + phosphate = alpha-D-ribose 1-phosphate + uracil. It catalyses the reaction xanthosine + phosphate = alpha-D-ribose 1-phosphate + xanthine. In terms of biological role, catalyzes the phosphorolysis of diverse nucleosides, yielding D-ribose 1-phosphate and the respective free bases. Can use uridine, adenosine, guanosine, cytidine, thymidine, inosine and xanthosine as substrates. Also catalyzes the reverse reactions. The sequence is that of Pyrimidine/purine nucleoside phosphorylase from Acidovorax ebreus (strain TPSY) (Diaphorobacter sp. (strain TPSY)).